Reading from the N-terminus, the 53-residue chain is YTSIKPLGDRVAEAEEKTAGGLLLTETTKEKPSIGTVIAVGPGSLDEEGKITP.

Cpn-10 domain regions lie at residues 1 to 10 (YTSIKPLGDR) and 11 to 53 (VAEA…KITP).

This sequence belongs to the GroES chaperonin family. In terms of assembly, forms stable complexes with cpn60 in the presence of ATP. Homotetramer.

It localises to the plastid. The protein localises to the chloroplast. Seems to function only as a co-chaperone, along with cpn60, and in certain cases is essential for the discharge of biologically active proteins from cpn60. In Populus euphratica (Euphrates poplar), this protein is 20 kDa chaperonin.